A 151-amino-acid chain; its full sequence is Large ribosomal subunit protein bL9 (151 aa).

It belongs to the bacterial ribosomal protein bL9 family.

Binds to the 23S rRNA. The protein is Large ribosomal subunit protein bL9 of Francisella philomiragia subsp. philomiragia (strain ATCC 25017 / CCUG 19701 / FSC 153 / O#319-036).